The following is a 281-amino-acid chain: Release factor glutamine methyltransferase (281 aa).

S-adenosyl-L-methionine is bound by residues glutamate 141 and asparagine 185. Residue 185–188 (NPPY) participates in substrate binding.

It belongs to the protein N5-glutamine methyltransferase family. PrmC subfamily.

The catalysed reaction is L-glutaminyl-[peptide chain release factor] + S-adenosyl-L-methionine = N(5)-methyl-L-glutaminyl-[peptide chain release factor] + S-adenosyl-L-homocysteine + H(+). Its function is as follows. Methylates the class 1 translation termination release factors RF1/PrfA and RF2/PrfB on the glutamine residue of the universally conserved GGQ motif. This chain is Release factor glutamine methyltransferase, found in Mycolicibacterium smegmatis (strain ATCC 700084 / mc(2)155) (Mycobacterium smegmatis).